We begin with the raw amino-acid sequence, 290 residues long: Inositol monophosphatase 2 (290 aa).

Mg(2+)-binding residues include glutamate 83, aspartate 103, isoleucine 105, and aspartate 106. Residue glutamate 83 coordinates substrate. Residues 105–108 (IDGT), 207–209 (GSS), glutamine 226, and aspartate 233 contribute to the substrate site. Aspartate 233 is a binding site for Mg(2+).

Belongs to the inositol monophosphatase superfamily. In terms of assembly, homodimer. The cofactor is Mg(2+).

Its subcellular location is the cytoplasm. The catalysed reaction is a myo-inositol phosphate + H2O = myo-inositol + phosphate. The protein operates within polyol metabolism; myo-inositol biosynthesis; myo-inositol from D-glucose 6-phosphate: step 2/2. Can use myo-inositol monophosphates, scylloinositol 1,4-diphosphate, glucose-1-phosphate, beta-glycerophosphate, and 2'-AMP as substrates. Has been implicated as the pharmacological target for lithium Li(+) action in brain. The sequence is that of Inositol monophosphatase 2 (Impa2) from Rattus norvegicus (Rat).